Reading from the N-terminus, the 946-residue chain is Villin-4 (946 aa).

Gelsolin-like repeat units lie at residues 28-109 (NFKP…ETEK), 152-219 (VHVK…EDGK), 274-339 (LEHE…TIMF), and 641-715 (EIHH…PQFF). 2 disordered regions span residues 744–783 (ATPSLDKPKRRTPAFSGRNAGQDKSQQRTRSMSHSPERHR) and 846–902 (TKST…PAPD). Residues 765 to 777 (QDKSQQRTRSMSH) show a composition bias toward polar residues. Over residues 874–883 (SENEPEDDEN) the composition is skewed to acidic residues. The HP domain occupies 881-946 (DENSTIYPYE…NRLKSDLQLF (66 aa)).

The protein belongs to the villin/gelsolin family.

Its subcellular location is the cytoplasm. It is found in the cytoskeleton. Its function is as follows. Ca(2+)-regulated actin-binding protein. Binds actin microfilaments (MFs). Involved in actin filament bundling, severing and capping. Caps the barbed end of actin filaments and is able to sever them in a calcium-dependent manner. The polypeptide is Villin-4 (Oryza sativa subsp. indica (Rice)).